Reading from the N-terminus, the 279-residue chain is Putative phosphoenolpyruvate synthase regulatory protein (279 aa).

An ADP-binding site is contributed by 159–166; that stretch reads GVSRSGKT.

This sequence belongs to the pyruvate, phosphate/water dikinase regulatory protein family. PSRP subfamily.

It carries out the reaction [pyruvate, water dikinase] + ADP = [pyruvate, water dikinase]-phosphate + AMP + H(+). The enzyme catalyses [pyruvate, water dikinase]-phosphate + phosphate + H(+) = [pyruvate, water dikinase] + diphosphate. Functionally, bifunctional serine/threonine kinase and phosphorylase involved in the regulation of the phosphoenolpyruvate synthase (PEPS) by catalyzing its phosphorylation/dephosphorylation. This is Putative phosphoenolpyruvate synthase regulatory protein from Ralstonia nicotianae (strain ATCC BAA-1114 / GMI1000) (Ralstonia solanacearum).